Consider the following 397-residue polypeptide: B3 domain-containing protein At4g34400 (397 aa).

The segment at residues 14 to 107 (PRFFTVFVSH…IFEVSIFRGY (94 aa)) is a DNA-binding region (TF-B3). A disordered region spans residues 118-255 (ELEEEEEDSV…SSYAPDKEDT (138 aa)). Over residues 137 to 160 (TGAKSEMKNTVPEGRDKGKSKVEV) the composition is skewed to basic and acidic residues. 3 stretches are compositionally biased toward acidic residues: residues 161–186 (VEDS…TDTD), 212–227 (SSDD…DSDY), and 235–246 (DIEENSISEEDS).

The protein localises to the nucleus. This chain is B3 domain-containing protein At4g34400, found in Arabidopsis thaliana (Mouse-ear cress).